A 238-amino-acid chain; its full sequence is Succinate dehydrogenase iron-sulfur subunit (238 aa).

The 90-residue stretch at 8 to 97 (YRYNPDVDDA…KIVIRPLPGL (90 aa)) folds into the 2Fe-2S ferredoxin-type domain. Residues C55, C60, and C75 each contribute to the [2Fe-2S] cluster site. A 4Fe-4S ferredoxin-type domain is found at 139–169 (QREKLDGLYECILCACCSTSCPSFWWNPDKF). Positions 149, 152, and 155 each coordinate [4Fe-4S] cluster. C159 contributes to the [3Fe-4S] cluster binding site. W164 serves as a coordination point for a ubiquinone. [3Fe-4S] cluster is bound by residues C206 and C212. C216 is a [4Fe-4S] cluster binding site.

Belongs to the succinate dehydrogenase/fumarate reductase iron-sulfur protein family. As to quaternary structure, part of an enzyme complex containing four subunits: a flavoprotein, an iron-sulfur, cytochrome b-556, and a hydrophobic anchor protein. The complex forms trimers. The cofactor is [2Fe-2S] cluster. Requires [3Fe-4S] cluster as cofactor. It depends on [4Fe-4S] cluster as a cofactor.

It localises to the cell inner membrane. It carries out the reaction a quinone + succinate = fumarate + a quinol. It functions in the pathway carbohydrate metabolism; tricarboxylic acid cycle; fumarate from succinate (bacterial route): step 1/1. In terms of biological role, two distinct, membrane-bound, FAD-containing enzymes are responsible for the catalysis of fumarate and succinate interconversion; the fumarate reductase is used in anaerobic growth, and the succinate dehydrogenase is used in aerobic growth. This chain is Succinate dehydrogenase iron-sulfur subunit (sdhB), found in Escherichia coli (strain K12).